We begin with the raw amino-acid sequence, 160 residues long: Probable NADH dehydrogenase [ubiquinone] 1 beta subcomplex subunit 2, mitochondrial (160 aa).

The protein belongs to the complex I NDUFB2 subunit family. As to quaternary structure, complex I is composed of 45 different subunits.

It is found in the mitochondrion inner membrane. Accessory subunit of the mitochondrial membrane respiratory chain NADH dehydrogenase (Complex I), that is believed not to be involved in catalysis. Complex I functions in the transfer of electrons from NADH to the respiratory chain. The immediate electron acceptor for the enzyme is believed to be ubiquinone. The protein is Probable NADH dehydrogenase [ubiquinone] 1 beta subcomplex subunit 2, mitochondrial of Caenorhabditis briggsae.